Here is a 339-residue protein sequence, read N- to C-terminus: uncharacterized protein (339 aa).

The interval 1-24 (IQPARRHTKNTNMAKHTTKGTGHS) is disordered. Positions 10–21 (NTNMAKHTTKGT) are enriched in polar residues.

It localises to the mitochondrion. This is an uncharacterized protein from Zea mays (Maize).